The chain runs to 76 residues: MMEVIKAIEFKYYSDVVELIYDFKEMVNFCIDKAMELGITSYAKLRKAIYNEWKEKWYPKYHTHYCHSACRVATSI.

It to M.jannaschii MJ0857 N-terminal region.

This is an uncharacterized protein from Methanocaldococcus jannaschii (strain ATCC 43067 / DSM 2661 / JAL-1 / JCM 10045 / NBRC 100440) (Methanococcus jannaschii).